Here is an 86-residue protein sequence, read N- to C-terminus: Putative defensin-like protein 244 (86 aa).

Residues 1 to 22 (MKGIAMLLVSCLLFSFLSTNLA) form the signal peptide. 4 disulfides stabilise this stretch: C28–C83, C38–C67, C48–C77, and C65–C79.

Belongs to the DEFL family.

It localises to the secreted. This is Putative defensin-like protein 244 (SCRL11) from Arabidopsis thaliana (Mouse-ear cress).